A 245-amino-acid chain; its full sequence is Inner membrane protein YgaZ (245 aa).

At 1 to 24 the chain is on the cytoplasmic side; sequence MESPTPQPAPGSATFMEGCKDSLP. A helical membrane pass occupies residues 25 to 45; that stretch reads IVISYIPVAFAFGLNATRLGF. The Periplasmic portion of the chain corresponds to 46 to 63; that stretch reads SPLESVFFSCIIYAGASQ. Residues 64–84 traverse the membrane as a helical segment; the sequence is FVITAMLAAGSSLWIAALTVM. Residues 85–109 are Cytoplasmic-facing; the sequence is AMDVRHVLYGPSLRSRIIQRLQKSK. The chain crosses the membrane as a helical span at residues 110-130; the sequence is TALWAFGLTDEVFAAATAKLV. Over 131–140 the chain is Periplasmic; that stretch reads RNNRRWSENW. Residues 141–161 form a helical membrane-spanning segment; the sequence is MIGIAFSSWSSWVFGTVIGAF. Residues 162–172 lie on the Cytoplasmic side of the membrane; the sequence is SGSGLLQGYPA. Residues 173-193 traverse the membrane as a helical segment; that stretch reads VEAALGFMLPALFMSFLLASF. Residues 194–205 are Periplasmic-facing; it reads QRKQSLCVTAAL. A helical membrane pass occupies residues 206-226; it reads VGALAGVTLFSIPVAILAGIV. The Cytoplasmic segment spans residues 227-245; that stretch reads CGCLTALIQAFWQGAPDEL.

The protein belongs to the AzlC family.

It localises to the cell inner membrane. The sequence is that of Inner membrane protein YgaZ (ygaZ) from Escherichia coli (strain K12).